We begin with the raw amino-acid sequence, 79 residues long: Acyl carrier protein (79 aa).

In terms of domain architecture, Carrier spans 2–77; sequence SDIEARVKKI…NAIDYANTHQ (76 aa). Ser37 carries the post-translational modification O-(pantetheine 4'-phosphoryl)serine.

This sequence belongs to the acyl carrier protein (ACP) family. 4'-phosphopantetheine is transferred from CoA to a specific serine of apo-ACP by AcpS. This modification is essential for activity because fatty acids are bound in thioester linkage to the sulfhydryl of the prosthetic group.

The protein localises to the cytoplasm. The protein operates within lipid metabolism; fatty acid biosynthesis. In terms of biological role, carrier of the growing fatty acid chain in fatty acid biosynthesis. The polypeptide is Acyl carrier protein (Paracidovorax citrulli (strain AAC00-1) (Acidovorax citrulli)).